The primary structure comprises 824 residues: Dapper 1-B (824 aa).

3 disordered regions span residues 1–33 (MKPI…RQRT), 131–150 (EEHL…LSDG), and 515–534 (HASS…EGSS). Positions 2–343 (KPIPAAPEPL…PVRTNKPRTS (342 aa)) are interaction with tcf7l1-A. Residues 16-33 (DSPRRKDKGEAESERQRT) are compositionally biased toward basic and acidic residues. Positions 84 to 139 (EEKFLEDNILLLKKQLNCLRKRDAGLLSQLHELDKQINDLRIDVEKTEEHLETDSR) form a coiled coil. A compositionally biased stretch (basic and acidic residues) spans 520-530 (FDERPPLDFKS). A PDZ-binding motif is present at residues 821 to 824 (MTTV).

This sequence belongs to the dapper family. As to quaternary structure, interacts with dbf4 and tcf7l1-A. Interacts with dvl2/dsh; the interaction is required for dact1-b phosphorylation by CaMK1D and seems to become disrupted by the phosphorylation. In terms of processing, phosphorylated by CaMK1D; the phosphorylation requires binding to dvl2/dsh. Expressed both in the dorsal lip in early gastrula and throughout the posterior presumptive ectoderm in early neurula. Expressed in the dorsal neural folds at the tailbud stage and highly expressed in the tadpole head, including the brain, retina and cartilaginous branchial arch derivatives.

The protein localises to the cytoplasm. It localises to the nucleus. Its function is as follows. Involved in regulation of intracellular signaling pathways during development. Specifically thought to play a role in canonical and/or non-canonical Wnt signaling pathways through interaction with DSH (Dishevelled) family proteins. Binds to dvl2 to regulate the degradation of beta-catenin (ctnnb1-A and possibly ctnnb1-B), thereby modulating the transcriptional activation of target genes of the Wnt signaling pathway. Seems to promote beta-catenin degradation if not phosphorylated and to block beta-catenin degradation if phosphorylated by CaMK1D. Involved in regulation of catenin delta/ctnnd1 protein level. May also bind to and directly stimulate the activity of tcf7l1-A. Also regulates the activation by dvl2 of jnk, a component of ctnnb1/beta-catenin-independent frizzled signaling. Required for notochord and head formation. This is Dapper 1-B (dact1-b) from Xenopus laevis (African clawed frog).